A 179-amino-acid polypeptide reads, in one-letter code: Large ribosomal subunit protein uL5 (179 aa).

It belongs to the universal ribosomal protein uL5 family. In terms of assembly, part of the 50S ribosomal subunit; part of the 5S rRNA/L5/L18/L25 subcomplex. Contacts the 5S rRNA and the P site tRNA. Forms a bridge to the 30S subunit in the 70S ribosome.

In terms of biological role, this is one of the proteins that bind and probably mediate the attachment of the 5S RNA into the large ribosomal subunit, where it forms part of the central protuberance. In the 70S ribosome it contacts protein S13 of the 30S subunit (bridge B1b), connecting the 2 subunits; this bridge is implicated in subunit movement. Contacts the P site tRNA; the 5S rRNA and some of its associated proteins might help stabilize positioning of ribosome-bound tRNAs. The sequence is that of Large ribosomal subunit protein uL5 from Francisella tularensis subsp. tularensis (strain SCHU S4 / Schu 4).